A 537-amino-acid polypeptide reads, in one-letter code: uncharacterized protein (537 aa).

The next 6 helical transmembrane spans lie at 5 to 25, 40 to 60, 63 to 83, 115 to 135, 149 to 169, and 197 to 217; these read IGLG…PWFV, LAVA…FFGW, VLWV…MAVV, GLYY…HLEG, VYLL…WVTL, and VGIV…ALVI.

The protein resides in the plastid. It is found in the chloroplast membrane. This is an uncharacterized protein from Ostreococcus tauri.